A 143-amino-acid chain; its full sequence is Deoxyuridine 5'-triphosphate nucleotidohydrolase (143 aa).

Substrate is bound by residues 63 to 65 (RSG), Asn-76, 80 to 82 (TID), and Lys-90.

It belongs to the dUTPase family. Mg(2+) is required as a cofactor.

It carries out the reaction dUTP + H2O = dUMP + diphosphate + H(+). It participates in pyrimidine metabolism; dUMP biosynthesis; dUMP from dCTP (dUTP route): step 2/2. Its function is as follows. This enzyme is involved in nucleotide metabolism: it produces dUMP, the immediate precursor of thymidine nucleotides and it decreases the intracellular concentration of dUTP so that uracil cannot be incorporated into DNA. The sequence is that of Deoxyuridine 5'-triphosphate nucleotidohydrolase from Clostridioides difficile (Peptoclostridium difficile).